Here is a 396-residue protein sequence, read N- to C-terminus: Putative pyridoxal phosphate-dependent acyltransferase (396 aa).

Residue 111 to 112 participates in pyridoxal 5'-phosphate binding; that stretch reads GF. His136 is a substrate binding site. Pyridoxal 5'-phosphate-binding positions include Ser186, 211-214, and 241-244; these read DDAH and TLSK. Lys244 is modified (N6-(pyridoxal phosphate)lysine). Position 358 (Thr358) interacts with substrate.

The protein belongs to the class-II pyridoxal-phosphate-dependent aminotransferase family. In terms of assembly, homodimer. It depends on pyridoxal 5'-phosphate as a cofactor.

The chain is Putative pyridoxal phosphate-dependent acyltransferase from Bacillus anthracis.